The primary structure comprises 334 residues: Beta-hexosaminidase (334 aa).

Substrate contacts are provided by residues aspartate 57, arginine 65, arginine 128, and 158-159; that span reads KH. The active-site Proton donor/acceptor is histidine 171. Residue aspartate 242 is the Nucleophile of the active site.

This sequence belongs to the glycosyl hydrolase 3 family. NagZ subfamily.

It is found in the cytoplasm. It carries out the reaction Hydrolysis of terminal non-reducing N-acetyl-D-hexosamine residues in N-acetyl-beta-D-hexosaminides.. The protein operates within cell wall biogenesis; peptidoglycan recycling. In terms of biological role, plays a role in peptidoglycan recycling by cleaving the terminal beta-1,4-linked N-acetylglucosamine (GlcNAc) from peptide-linked peptidoglycan fragments, giving rise to free GlcNAc, anhydro-N-acetylmuramic acid and anhydro-N-acetylmuramic acid-linked peptides. The polypeptide is Beta-hexosaminidase (Methylococcus capsulatus (strain ATCC 33009 / NCIMB 11132 / Bath)).